Consider the following 360-residue polypeptide: Photosystem II protein D1 (360 aa).

3 helical membrane-spanning segments follow: residues 29–46 (YIGWFGVLMIPTLLTATT), 118–133 (HFLLGVASYMGREWEL), and 142–156 (WIFVAFSAPVAAASA). Residue His118 coordinates chlorophyll a. Tyr126 is a pheophytin a binding site. Residues Asp170 and Glu189 each coordinate [CaMn4O5] cluster. The chain crosses the membrane as a helical span at residues 197 to 218 (FHMAGVAGVFGGSLFSAMHGSL). His198 lines the chlorophyll a pocket. Residues His215 and 264–265 (SF) each bind a quinone. His215 is a binding site for Fe cation. Residue His272 participates in Fe cation binding. The helical transmembrane segment at 274-288 (FLAAWPVVRIWLTAL) threads the bilayer. 4 residues coordinate [CaMn4O5] cluster: His332, Glu333, Asp342, and Ala344. A propeptide spanning residues 345-360 (AGEVLPVAVSAPAVHA) is cleaved from the precursor.

It belongs to the reaction center PufL/M/PsbA/D family. In terms of assembly, PSII is composed of 1 copy each of membrane proteins PsbA, PsbB, PsbC, PsbD, PsbE, PsbF, PsbH, PsbI, PsbJ, PsbK, PsbL, PsbM, PsbT, PsbX, PsbY, PsbZ, Psb30/Ycf12, at least 3 peripheral proteins of the oxygen-evolving complex and a large number of cofactors. It forms dimeric complexes. Requires The D1/D2 heterodimer binds P680, chlorophylls that are the primary electron donor of PSII, and subsequent electron acceptors. It shares a non-heme iron and each subunit binds pheophytin, quinone, additional chlorophylls, carotenoids and lipids. D1 provides most of the ligands for the Mn4-Ca-O5 cluster of the oxygen-evolving complex (OEC). There is also a Cl(-1) ion associated with D1 and D2, which is required for oxygen evolution. The PSII complex binds additional chlorophylls, carotenoids and specific lipids. as cofactor. Post-translationally, tyr-161 forms a radical intermediate that is referred to as redox-active TyrZ, YZ or Y-Z. C-terminally processed by CTPA; processing is essential to allow assembly of the oxygen-evolving complex and thus photosynthetic growth.

Its subcellular location is the plastid. The protein resides in the chloroplast thylakoid membrane. The catalysed reaction is 2 a plastoquinone + 4 hnu + 2 H2O = 2 a plastoquinol + O2. In terms of biological role, photosystem II (PSII) is a light-driven water:plastoquinone oxidoreductase that uses light energy to abstract electrons from H(2)O, generating O(2) and a proton gradient subsequently used for ATP formation. It consists of a core antenna complex that captures photons, and an electron transfer chain that converts photonic excitation into a charge separation. The D1/D2 (PsbA/PsbD) reaction center heterodimer binds P680, the primary electron donor of PSII as well as several subsequent electron acceptors. The sequence is that of Photosystem II protein D1 from Bumilleriopsis filiformis (Yellow-green alga).